The chain runs to 794 residues: Kinesin-like protein KIN-13A (794 aa).

Residues 193–526 (KIKVVVRKRP…LRYADRVKSL (334 aa)) enclose the Kinesin motor domain. An ATP-binding site is contributed by 282-289 (GQTGSGKT). Residues 525-699 (SLSKSGNSKK…YETASRQYET (175 aa)) are disordered. Positions 569–579 (ETRRRVVEKDS) are enriched in basic and acidic residues. Polar residues-rich tracts occupy residues 580–593 (NSST…QPTN) and 611–632 (EPNS…YPQE). The segment covering 650–668 (GLREEKPDRPQNWSKRDVS) has biased composition (basic and acidic residues). A compositionally biased stretch (polar residues) spans 669-696 (SSDIPTLTNFRQNASETASRQYETASRQ). Residues 705-742 (ENLDALLEEEEALIAAHRKEIEDTMEIVREEMKLLAEV) adopt a coiled-coil conformation.

This sequence belongs to the TRAFAC class myosin-kinesin ATPase superfamily. Kinesin family. KIN-13 subfamily. As to quaternary structure, component of the active ARAC10-IRC5-KIN13A complex. Interacts (via-C-terminus) with ICR2 and ICR5 (via N-terminus). No interactions with ICR1. Expressed in leaves, roots, young and mature seedlings. Preferentially expressed in the secondary cell wall pits of differentiating metaxylem vessel cells (at the protein level).

It localises to the golgi apparatus. Its subcellular location is the golgi stack. It is found in the cytoplasm. The protein localises to the cytoskeleton. Internal motor kinesin involved in trichome morphogenesis. Participates in regulating the formation of Golgi-associated vesicles. Plays a central role in microtubule disassembly via the active ARAC10-ICR5 cascade, which establishes the secondary cell wall pattern in metaxylem vessel cells. Acts redundantly with KIN13B to modulate cell wall synthesis and cell expansion via the THE1 pathway. The protein is Kinesin-like protein KIN-13A of Arabidopsis thaliana (Mouse-ear cress).